The primary structure comprises 228 residues: uncharacterized protein (228 aa).

A run of 5 helical transmembrane segments spans residues 14-34 (HTIS…MLLV), 42-62 (VALF…AITL), 130-150 (FIFS…LVGS), 156-176 (FSFD…VLFM), and 192-212 (IVIA…LIAL).

The protein belongs to the AzlC family.

Its subcellular location is the cell membrane. This is an uncharacterized protein from Helicobacter pylori (strain ATCC 700392 / 26695) (Campylobacter pylori).